The chain runs to 173 residues: Alpha-crystallin A chain (173 aa).

Methionine 1 bears the N-acetylmethionine mark. The segment at 1-63 (MDVTIQHPWF…RTVLDSGISE (63 aa)) is required for complex formation with BFSP1 and BFSP2. Position 6 is a deamidated glutamine; partial (glutamine 6). Serine 45 carries the post-translational modification Phosphoserine. Deamidated glutamine; partial is present on glutamine 50. The sHSP domain occupies 52 to 162 (LFRTVLDSGI…SHSERAIPVS (111 aa)). Lysine 99 bears the N6-acetyllysine mark. A Zn(2+)-binding site is contributed by histidine 100. Asparagine 101 carries the deamidated asparagine; partial modification. Residues glutamate 102 and histidine 107 each contribute to the Zn(2+) site. Serine 122 carries the post-translational modification Phosphoserine. Asparagine 123 bears the Deamidated asparagine; partial mark. An intrachain disulfide couples cysteine 131 to cysteine 142. Glutamine 147 bears the Deamidated glutamine; partial mark. The segment at 147–173 (QSGMDASHSERAIPVSREEKPSSAPSS) is disordered. The span at 153–167 (SHSERAIPVSREEKP) shows a compositional bias: basic and acidic residues. Position 154 (histidine 154) interacts with Zn(2+). O-linked (GlcNAc) serine glycosylation is present at serine 162.

Belongs to the small heat shock protein (HSP20) family. As to quaternary structure, heteromer composed of three CRYAA and one CRYAB subunits. Inter-subunit bridging via zinc ions enhances stability, which is crucial as there is no protein turn over in the lens. Can also form homodimers and homotetramers (dimers of dimers) which serve as the building blocks of homooligomers. Within homooligomers, the zinc-binding motif is created from residues of 3 different molecules. His-100 and Glu-102 from one molecule are ligands of the zinc ion, and His-107 and His-154 residues from additional molecules complete the site with tetrahedral coordination geometry. Part of a complex required for lens intermediate filament formation composed of BFSP1, BFSP2 and CRYAA. Undergoes age-dependent proteolytical cleavage at the C-terminus.

Its subcellular location is the cytoplasm. It is found in the nucleus. Functionally, contributes to the transparency and refractive index of the lens. In its oxidized form (absence of intramolecular disulfide bond), acts as a chaperone, preventing aggregation of various proteins under a wide range of stress conditions. Required for the correct formation of lens intermediate filaments as part of a complex composed of BFSP1, BFSP2 and CRYAA. The protein is Alpha-crystallin A chain (CRYAA) of Procavia capensis (Rock hyrax).